The primary structure comprises 642 residues: Transmembrane 9 superfamily member 4 (642 aa).

The N-terminal stretch at 1–23 (MATAMDWLPWSLLLFSLMCETSA) is a signal peptide. The Extracellular portion of the chain corresponds to 24 to 281 (FYVPGVAPIN…TMSDVQIHWF (258 aa)). Residues 282-302 (SIINSVVVVFFLSGILSMIII) form a helical membrane-spanning segment. Over 303 to 346 (RTLRKDIANYNKEDDIEDTMEESGWKLVHGDVFRPPQYPMILSS) the chain is Cytoplasmic. Tyr312 bears the Phosphotyrosine mark. Residues 347–367 (LLGSGIQLFCMILIVIFVAML) form a helical membrane-spanning segment. Residues 368 to 376 (GMLSPSSRG) are Extracellular-facing. The helical transmembrane segment at 377 to 397 (ALMTTACFLFMFMGVFGGFSA) threads the bilayer. At 398–416 (GRLYRTLKGHRWKKGAFCT) the chain is on the cytoplasmic side. Residues 417–437 (ATLYPGVVFGICFVLNCFIWG) traverse the membrane as a helical segment. Topologically, residues 438-449 (KHSSGAVPFPTM) are extracellular. Residues 450–470 (VALLCMWFGISLPLVYLGYYF) form a helical membrane-spanning segment. Residues 471-501 (GFRKQPYDNPVRTNQIPRQIPEQRWYMNRFV) lie on the Cytoplasmic side of the membrane. A helical membrane pass occupies residues 502-522 (GILMAGILPFGAMFIELFFIF). The Extracellular portion of the chain corresponds to 523-535 (SAIWENQFYYLFG). The helical transmembrane segment at 536–556 (FLFLVFIILVVSCSQISIVMV) threads the bilayer. Over 557-570 (YFQLCAEDYRWWWR) the chain is Cytoplasmic. The helical transmembrane segment at 571–591 (NFLVSGGSAFYVLVYAIFYFV) threads the bilayer. Residues 592-598 (NKLDIVE) are Extracellular-facing. A helical membrane pass occupies residues 599-619 (FIPSLLYFGYTALMVLSFWLL). Over 620-642 (TGTIGFYAAYMFVRKIYAAVKID) the chain is Cytoplasmic.

It belongs to the nonaspanin (TM9SF) (TC 9.A.2) family. As to quaternary structure, interacts with ATP6V1H in colon cancer cells. Highly expressed in metastatic melanoma cells whereas it is undetectable in primary melanoma cells, healthy skin tissues and peripheral blood lymphocytes. Expressed in CD34(+) hematopoietic progenitor cells and during monocyte and granulocyte differentiation. Overexpressed in acute myeloid leukemia, in particular in those displaying granulocytic differentiation (at protein level).

The protein localises to the membrane. It localises to the golgi apparatus. The protein resides in the early endosome. Its function is as follows. Associates with proteins harboring glycine-rich transmembrane domains and ensures their efficient localization to the cell surface. Regulates the assembly and activity of V-ATPase in colon cancer cells via its interaction with V-type proton ATPase subunit H (ATP6V1H) and contributes to V-ATPase-mediated pH alterations in cancer cells which play an important role in drug resistance and invasiveness of colon cancer cells. Plays an important role in an atypical phagocytic activity of metastatic melanoma cells called cannibalism and is involved in the pH regulation of the intracellular vesicles in tumor cells. The polypeptide is Transmembrane 9 superfamily member 4 (TM9SF4) (Homo sapiens (Human)).